The primary structure comprises 232 residues: Thiamine import ATP-binding protein ThiQ (232 aa).

Positions 2–230 constitute an ABC transporter domain; sequence LKLTDITWLY…KASASALLGI (229 aa). 32-39 is a binding site for ATP; sequence GPSGAGKS.

It belongs to the ABC transporter superfamily. Thiamine importer (TC 3.A.1.19.1) family. The complex is composed of two ATP-binding proteins (ThiQ), two transmembrane proteins (ThiP) and a solute-binding protein (ThiB).

Its subcellular location is the cell inner membrane. The enzyme catalyses thiamine(out) + ATP + H2O = thiamine(in) + ADP + phosphate + H(+). Functionally, part of the ABC transporter complex ThiBPQ involved in thiamine import. Responsible for energy coupling to the transport system. This chain is Thiamine import ATP-binding protein ThiQ, found in Escherichia coli O6:H1 (strain CFT073 / ATCC 700928 / UPEC).